A 335-amino-acid polypeptide reads, in one-letter code: MKLKLKNVFLAYFLVSIAGLLYALVQLGQPCDCLPPLRAAAEQLRQKDLRISQLQADLRRPPPVPAQPPEPEALPTIYVITPTYARLVQKAELVRLSQTLSLVPRLHWLLVEDAESPTPLVSGLLAASGLLFTHLAVLTPKAQRLREGEPGWVRPRGVEQRNKALDWLRGKGGAVGGEKDPPPPGTQGVVYFADDDNTYSRELFKEMRWTRGVSVWPVGLVGGLRFEGPQVQDGRVVGFHTAWEPNRPFPLDMAGFAVALPLLLAKPNAQFDATAPRGHLESSLLSHLVDPKDLEPRAANCTQVLVWHTRTEKPKMKQEEQLQRQGQGSDPAIEV.

Residues 1–7 are Cytoplasmic-facing; it reads MKLKLKN. Residues 8–28 traverse the membrane as a helical; Signal-anchor for type II membrane protein segment; sequence VFLAYFLVSIAGLLYALVQLG. At 29 to 335 the chain is on the lumenal side; sequence QPCDCLPPLR…GQGSDPAIEV (307 aa). Residues 82-84, Asp113, Arg156, Arg161, and 194-196 contribute to the UDP-alpha-D-glucuronate site; these read PTY and DDD. Asp196 serves as a coordination point for Mn(2+). An interaction with galactose moiety of substrate glycoprotein region spans residues 243–252; sequence WEPNRPFPLD. Glu281 (proton donor/acceptor) is an active-site residue. An N-linked (GlcNAc...) asparagine glycan is attached at Asn300. 308–310 contributes to the UDP-alpha-D-glucuronate binding site; that stretch reads HTR. Residues 312–322 are compositionally biased toward basic and acidic residues; sequence EKPKMKQEEQL. A disordered region spans residues 312 to 335; sequence EKPKMKQEEQLQRQGQGSDPAIEV.

Belongs to the glycosyltransferase 43 family. Homodimer; disulfide-linked. Interacts with PXYLP1; the interaction increases the 2-phosphoxylose phosphatase activity of PXYLP1 during completion of linkage region formation in a B3GAT3-mediated manner. It depends on Mn(2+) as a cofactor. Post-translationally, N-glycosylated. In terms of tissue distribution, expressed in heart, aorta, bone, and also in osteoblasts.

It localises to the golgi apparatus membrane. The protein resides in the golgi apparatus. It is found in the cis-Golgi network. The enzyme catalyses 3-O-(beta-D-galactosyl-(1-&gt;3)-beta-D-galactosyl-(1-&gt;4)-beta-D-xylosyl)-L-seryl-[protein] + UDP-alpha-D-glucuronate = 3-O-(beta-D-GlcA-(1-&gt;3)-beta-D-Gal-(1-&gt;3)-beta-D-Gal-(1-&gt;4)-beta-D-Xyl)-L-seryl-[protein] + UDP + H(+). It functions in the pathway protein modification; protein glycosylation. In terms of biological role, glycosaminoglycans biosynthesis. Involved in forming the linkage tetrasaccharide present in heparan sulfate and chondroitin sulfate. Transfers a glucuronic acid moiety from the uridine diphosphate-glucuronic acid (UDP-GlcUA) to the common linkage region trisaccharide Gal-beta-1,3-Gal-beta-1,4-Xyl covalently bound to a Ser residue at the glycosaminylglycan attachment site of proteoglycans. Can also play a role in the biosynthesis of l2/HNK-1 carbohydrate epitope on glycoproteins. Stimulates 2-phosphoxylose phosphatase activity of PXYLP1 in presence of uridine diphosphate-glucuronic acid (UDP-GlcUA) during completion of linkage region formation. The chain is Galactosylgalactosylxylosylprotein 3-beta-glucuronosyltransferase 3 (B3gat3) from Mus musculus (Mouse).